The chain runs to 246 residues: MSTHNDSAPTSRRRHIVRLVVFAGFLVGMFYLVAATDVIDVAAVRGAVSATGPAAPLTYVVVSAVLGALFVPGPILAASSGLLFGPLVGVFVTLGATVGTAVVASLVGRRAGRASARALLGGERADRTDALIERCGLWAVVGQRFVPGISDAFASYAFGTFGVPLWQMAVGAFIGSAPRAFAYTALGAAIGDRSPLLASCAIAVWCVTAIIGAFAARHGYRQWRAHARGDGADGGVEDPDREVGAR.

A run of 5 helical transmembrane segments spans residues 19-39 (LVVFAGFLVGMFYLVAATDVI), 57-77 (LTYVVVSAVLGALFVPGPILA), 83-103 (LFGPLVGVFVTLGATVGTAVV), 157-177 (AFGTFGVPLWQMAVGAFIGSA), and 196-216 (LLASCAIAVWCVTAIIGAFAA).

It belongs to the TVP38/TMEM64 family.

Its subcellular location is the cell membrane. The protein is TVP38/TMEM64 family membrane protein MT0653 of Mycobacterium tuberculosis (strain CDC 1551 / Oshkosh).